The chain runs to 273 residues: Large ribosomal subunit protein uL2 (273 aa).

The tract at residues 221–263 (RGTAMNPVDHPHGGGEGRNFGKHPVTPWGVQTKGKKTRHNKRT) is disordered. The segment covering 253–263 (KGKKTRHNKRT) has biased composition (basic residues).

It belongs to the universal ribosomal protein uL2 family. As to quaternary structure, part of the 50S ribosomal subunit. Forms a bridge to the 30S subunit in the 70S ribosome.

Its function is as follows. One of the primary rRNA binding proteins. Required for association of the 30S and 50S subunits to form the 70S ribosome, for tRNA binding and peptide bond formation. It has been suggested to have peptidyltransferase activity; this is somewhat controversial. Makes several contacts with the 16S rRNA in the 70S ribosome. The polypeptide is Large ribosomal subunit protein uL2 (Histophilus somni (strain 2336) (Haemophilus somnus)).